The primary structure comprises 23 residues: GLKDIFKAGLGSLVKGIAAHVAN.

Asn23 carries the post-translational modification Asparagine amide.

Expressed by the skin glands.

It localises to the secreted. It is found in the target cell membrane. Functionally, antibacterial peptide with amphipathic alpha-helical structure. Shows selective growth inhibitory activity against the Gram-negative bacteria E.coli (MIC=25 uM) Has a weak hemolytic activity against human erythrocytes (LC(50)&gt;100 uM). Is very weakly active against S.aureus (MIC=200 uM). This chain is Alyteserin-1a, found in Alytes obstetricans (Common midwife toad).